Consider the following 80-residue polypeptide: Large ribosomal subunit protein uL24 (80 aa).

This sequence belongs to the universal ribosomal protein uL24 family. As to quaternary structure, part of the 50S ribosomal subunit.

Functionally, one of two assembly initiator proteins, it binds directly to the 5'-end of the 23S rRNA, where it nucleates assembly of the 50S subunit. One of the proteins that surrounds the polypeptide exit tunnel on the outside of the subunit. The protein is Large ribosomal subunit protein uL24 of Chlorobium phaeobacteroides (strain BS1).